We begin with the raw amino-acid sequence, 174 residues long: Pituitary tumor-transforming gene 1 protein-interacting protein (174 aa).

An N-terminal signal peptide occupies residues 1–29; sequence MAPANLGLTPHWVMLLGAVLLLLLSGASA. Residues 30 to 93 lie on the Extracellular side of the membrane; that stretch reads QEPPRVGCSE…RWGVCWVNFE (64 aa). The PSI domain occupies 36–89; it reads GCSEYTNRSCEECLRNVSCLWCNENKACMDYPVRKILPPASLCKLSSARWGVCW. N-linked (GlcNAc...) asparagine glycans are attached at residues Asn42 and Asn51. The helical transmembrane segment at 94–114 threads the bilayer; that stretch reads ALIITMSVLGGSVLLGITVCC. Topologically, residues 115 to 174 are cytoplasmic; sequence CYCCRRKKSRKPDKSDERAMREQEERRVRQEERRAEMKSRHDEIRKKYGLFKEQNPYEKF. A disordered region spans residues 125–155; the sequence is KPDKSDERAMREQEERRVRQEERRAEMKSRH. The span at 126–155 shows a compositional bias: basic and acidic residues; it reads PDKSDERAMREQEERRVRQEERRAEMKSRH. A coiled-coil region spans residues 127-163; that stretch reads DKSDERAMREQEERRVRQEERRAEMKSRHDEIRKKYG. Tyr171 carries the phosphotyrosine modification.

Interacts with PTTG1.

It localises to the cell membrane. The protein localises to the cytoplasm. The protein resides in the nucleus. Its function is as follows. May facilitate PTTG1 nuclear translocation. This chain is Pituitary tumor-transforming gene 1 protein-interacting protein (Pttg1ip), found in Mus musculus (Mouse).